The following is a 460-amino-acid chain: Cytochrome P450 CYP71D312 (460 aa).

A heme-binding site is contributed by Cys398.

Belongs to the cytochrome P450 family. Requires heme as cofactor.

Functionally, probable heme-thiolate monooxygenase. This is Cytochrome P450 CYP71D312 from Panax ginseng (Korean ginseng).